The chain runs to 577 residues: MTLHWSLLLFIAIALVSSVAQAAVVEHTFNVGNFSISQLCQPPLIITAVNGQLPGPTIYAREGDTVVVHLVNTSPYSMTLHWHGVLQRGTPWADGPAMVTQCPVQPGGNYTYRFNVDGQEGTLWWHAHVSFHRATVYGALVIRPRGGAKAYPFPKPDKEHVVILGEWWNATVYDMERMAFLTGIPAPHADAYTINGKPGDFYNCSAPNQTAKFEVRQNGTYLLRIINAGMNTPLFFKVAKHRLTVVGADACYTKPYKTDVVVVSPGQTVDALMVASAAVGRYYMAASPYDSAIPQGPPFSDTTATAILQYAGARRKTVRWRPPVLPRRPPVNDTATAHRFFSGMTALLRHGKPSAVPLAVDTHMYVTVGLGVSLCQPEQLLCNRSAPPVFSSSMNNASFVVPKNTSLLEAHFRREPAGVYTRDFPDTPPVVFDYTGDESDNATMQFTTKSTKVKTLRYNETVEMVLQNTRLIAKESHPMHIHGFNFFILAQGFGNYDKRRAERRFNLVDPQERNTIAVPTGGWAVIRFVADNPGMWYMHCHFDAHISLGLAMVLEVLDGPTPETSVPPPPADLPRCS.

The signal sequence occupies residues 1 to 22 (MTLHWSLLLFIAIALVSSVAQA). Plastocyanin-like domains follow at residues 30–147 (NVGN…PRGG) and 158–313 (KEHV…YAGA). N33 is a glycosylation site (N-linked (GlcNAc...) asparagine). Cu cation is bound by residues H81 and H83. An N-linked (GlcNAc...) asparagine glycan is attached at N109. Cu cation contacts are provided by H126 and H128. 10 N-linked (GlcNAc...) asparagine glycosylation sites follow: N169, N203, N208, N218, N332, N383, N396, N404, N441, and N459. The Plastocyanin-like 3 domain maps to 423–560 (DFPDTPPVVF…AMVLEVLDGP (138 aa)). Residues H477, H480, H482, H539, C540, H541, and H545 each contribute to the Cu cation site.

The protein belongs to the multicopper oxidase family. Cu cation is required as a cofactor.

Its subcellular location is the secreted. It localises to the extracellular space. The protein resides in the apoplast. The catalysed reaction is 4 hydroquinone + O2 = 4 benzosemiquinone + 2 H2O. Its function is as follows. Lignin degradation and detoxification of lignin-derived products. The protein is Laccase-25 (LAC25) of Oryza sativa subsp. japonica (Rice).